Consider the following 163-residue polypeptide: MFMINNYLNEIWLIIGIICILVECYIVQNMGFLFLGLGALSNSLFVYNKPLVIFTLTNQITFFGLFSLVWFCILYYPLKKYVYNKTDKTKSYSDMIGKTVEVYSPTVSSNTIGQVKWSGAIMNAYLAPNEIDAKIGEQLFIIGVKGNILICSKHRFNNNADYC.

2 helical membrane-spanning segments follow: residues 7–27 and 51–71; these read YLNEIWLIIGIICILVECYIV and LVIFTLTNQITFFGLFSLVWF.

The protein localises to the cell membrane. This is an uncharacterized protein from Rickettsia prowazekii (strain Madrid E).